The sequence spans 633 residues: RpoH suppressor (633 aa).

The PNPLA domain occupies 11-410 (LVMKGGITSG…SSNFPIHLFD (400 aa)). Helical transmembrane passes span 38-58 (NIGG…AAVG), 133-153 (IAPV…YAVG), and 159-179 (IAAA…FAVL). The GXSXG signature appears at 41 to 45 (GTSAG). Catalysis depends on serine 43, which acts as the Nucleophile. Residues 342–380 (ARRESLPGSDGENEAEDTTSDEDEQKTVLDSTEALTTGG) form a disordered region. A compositionally biased stretch (acidic residues) spans 352 to 365 (GENEAEDTTSDEDE). Catalysis depends on aspartate 397, which acts as the Proton acceptor. Residues 397–399 (DGG) carry the DGA/G motif. Residues 605–624 (EGEKWSGEGPDLTKTAPRPL) form a disordered region.

The protein resides in the cell membrane. Functionally, this protein is non-essential for R.meliloti growth, but induces a heat-shock response in temperature-sensitive E.coli K165 by elevating levels of sigma 32 (mechanism unknown). The protein is RpoH suppressor (suhR) of Rhizobium meliloti (strain 1021) (Ensifer meliloti).